The following is a 139-amino-acid chain: D-ribose pyranase (139 aa).

The active-site Proton donor is His-20. Residues Asp-28, His-106, and 128-130 each bind substrate; that span reads YAN.

This sequence belongs to the RbsD / FucU family. RbsD subfamily. Homodecamer.

The protein localises to the cytoplasm. The catalysed reaction is beta-D-ribopyranose = beta-D-ribofuranose. It participates in carbohydrate metabolism; D-ribose degradation; D-ribose 5-phosphate from beta-D-ribopyranose: step 1/2. Catalyzes the interconversion of beta-pyran and beta-furan forms of D-ribose. This is D-ribose pyranase from Enterobacter sp. (strain 638).